Reading from the N-terminus, the 383-residue chain is Galactokinase (383 aa).

Residue 34–37 (EHTD) participates in substrate binding. An ATP-binding site is contributed by 124 to 130 (GAGLSSS). Residues serine 130 and glutamate 162 each contribute to the Mg(2+) site. The active-site Proton acceptor is the aspartate 174. Residue tyrosine 223 participates in substrate binding.

This sequence belongs to the GHMP kinase family. GalK subfamily.

It is found in the cytoplasm. It carries out the reaction alpha-D-galactose + ATP = alpha-D-galactose 1-phosphate + ADP + H(+). It participates in carbohydrate metabolism; galactose metabolism. Functionally, catalyzes the transfer of the gamma-phosphate of ATP to D-galactose to form alpha-D-galactose-1-phosphate (Gal-1-P). The chain is Galactokinase from Yersinia pseudotuberculosis serotype IB (strain PB1/+).